A 429-amino-acid chain; its full sequence is MTETLAIRPTDAAKDSGALIADMGARARAAAVRLAGAPTADKAKALVEAAKAIRARAAAILAANAEDVARAQANGLTAAMIDRLTLDPARLEGVAAGLEAVAALPDPVGQRIDETRRPNGLLLQRVRVPLGVIGIIYESRPNVTADAGALSLMSGNACILRGGSEATASNRAIHAALLDGIRAAGLPEDAIQLVPTTDRAAVGAMLAAQGLIDIIVPRGGKSLVARVQDEARVPVLAHLDGIVHLYIDRAADPAKAVPLAVNAKMRRTGVCGATETLLIDRAYGDPATIVGALVEAGCEVRGDADARAIDDRVLPAADSDWDCEYLDSILSVAIVDGVDGAMAHIARHSSHHTDAIVTEDQPTADRFLAGVDSAIVMHNASTQFADGGEFGLGAEIGISTGRLHARGPVALEGLTTYKWLVRGEGQLRP.

This sequence belongs to the gamma-glutamyl phosphate reductase family.

The protein resides in the cytoplasm. The enzyme catalyses L-glutamate 5-semialdehyde + phosphate + NADP(+) = L-glutamyl 5-phosphate + NADPH + H(+). It functions in the pathway amino-acid biosynthesis; L-proline biosynthesis; L-glutamate 5-semialdehyde from L-glutamate: step 2/2. Functionally, catalyzes the NADPH-dependent reduction of L-glutamate 5-phosphate into L-glutamate 5-semialdehyde and phosphate. The product spontaneously undergoes cyclization to form 1-pyrroline-5-carboxylate. This chain is Gamma-glutamyl phosphate reductase, found in Rhizorhabdus wittichii (strain DSM 6014 / CCUG 31198 / JCM 15750 / NBRC 105917 / EY 4224 / RW1) (Sphingomonas wittichii).